An 848-amino-acid chain; its full sequence is Glutenin, high molecular weight subunit DX5 (848 aa).

The first 21 residues, 1–21, serve as a signal peptide directing secretion; that stretch reads MAKRLVLFVAVVVALVALTVA. The segment at 124-804 is disordered; sequence YYPGQASPQR…GQQSGQGQQG (681 aa). Composition is skewed to low complexity over residues 126 to 137, 145 to 166, 173 to 203, 210 to 240, 263 to 303, 310 to 351, 359 to 411, 419 to 468, 476 to 527, 544 to 659, 670 to 687, 709 to 727, and 739 to 795; these read PGQASPQRPGQG, QGYY…QGQP, PQQS…GQPG, QLQP…PGQG, QGQQ…GQSG, QQPG…PGQG, PGYY…PGQG, QGQQ…YPTS, QQPG…QGQP, GQGQ…GQPG, QQPG…GQGQ, and GQGQ…TGQG.

The protein belongs to the gliadin/glutenin family. In terms of assembly, disulfide-bridge linked aggregates.

Glutenins are high-molecular weight seed storage proteins of wheat endosperm. Thought to be responsible for the visco-elastic property of wheat dough. In Triticum aestivum (Wheat), this protein is Glutenin, high molecular weight subunit DX5 (GLU-1D-1D).